A 247-amino-acid chain; its full sequence is uncharacterized protein (247 aa).

An N-terminal signal peptide occupies residues 1–35; it reads MWGPGVTAEGLSVAPAPPPLLPLLLLLALALVAPS. The helical transmembrane segment at 82–102 threads the bilayer; sequence LSGLLILLVLFAIGYFLQRII. Residues 109-176 are disordered; it reads YPRGQARPGQ…RGSGGRLPPS (68 aa). Positions 111-120 are enriched in low complexity; sequence RGQARPGQAR. A compositionally biased stretch (gly residues) spans 161-171; the sequence is SGGGRGRGSGG.

The protein localises to the membrane. This is an uncharacterized protein from Mus musculus (Mouse).